The following is a 536-amino-acid chain: CTP synthase (536 aa).

Positions 1–267 (MTKFIFVTGG…DDIVIKRLQL (267 aa)) are amidoligase domain. Ser-13 contacts CTP. Residue Ser-13 participates in UTP binding. 14–19 (SLGKGI) is an ATP binding site. Tyr-54 lines the L-glutamine pocket. Position 71 (Asp-71) interacts with ATP. Residues Asp-71 and Glu-141 each contribute to the Mg(2+) site. Residues 148–150 (DIE), 188–193 (KTKPTQ), and Lys-224 each bind CTP. UTP is bound by residues 188 to 193 (KTKPTQ) and Lys-224. Position 240–242 (240–242 (RDA)) interacts with ATP. Positions 293-535 (TIGLVGKYVS…IEASLKYQQN (243 aa)) constitute a Glutamine amidotransferase type-1 domain. Residue Gly-355 participates in L-glutamine binding. Residue Cys-382 is the Nucleophile; for glutamine hydrolysis of the active site. L-glutamine contacts are provided by residues 383-386 (LGMQ), Glu-406, and Arg-463. Active-site residues include His-508 and Glu-510.

It belongs to the CTP synthase family. Homotetramer.

It carries out the reaction UTP + L-glutamine + ATP + H2O = CTP + L-glutamate + ADP + phosphate + 2 H(+). The enzyme catalyses L-glutamine + H2O = L-glutamate + NH4(+). The catalysed reaction is UTP + NH4(+) + ATP = CTP + ADP + phosphate + 2 H(+). Its pathway is pyrimidine metabolism; CTP biosynthesis via de novo pathway; CTP from UDP: step 2/2. With respect to regulation, allosterically activated by GTP, when glutamine is the substrate; GTP has no effect on the reaction when ammonia is the substrate. The allosteric effector GTP functions by stabilizing the protein conformation that binds the tetrahedral intermediate(s) formed during glutamine hydrolysis. Inhibited by the product CTP, via allosteric rather than competitive inhibition. Functionally, catalyzes the ATP-dependent amination of UTP to CTP with either L-glutamine or ammonia as the source of nitrogen. Regulates intracellular CTP levels through interactions with the four ribonucleotide triphosphates. The protein is CTP synthase of Staphylococcus aureus (strain COL).